The primary structure comprises 339 residues: Protein-glutamate methylesterase/protein-glutamine glutaminase (339 aa).

A Response regulatory domain is found at 2-119 (RIGVVNDMPM…EGNASSQSAR (118 aa)). Asp-53 carries the post-translational modification 4-aspartylphosphate. The region spanning 149 to 338 (PTPRRLIAIG…SRIIEACERS (190 aa)) is the CheB-type methylesterase domain. Catalysis depends on residues Ser-160, His-187, and Asp-280.

The protein belongs to the CheB family. In terms of processing, phosphorylated by CheA. Phosphorylation of the N-terminal regulatory domain activates the methylesterase activity.

Its subcellular location is the cytoplasm. It carries out the reaction [protein]-L-glutamate 5-O-methyl ester + H2O = L-glutamyl-[protein] + methanol + H(+). It catalyses the reaction L-glutaminyl-[protein] + H2O = L-glutamyl-[protein] + NH4(+). Its function is as follows. Involved in chemotaxis. Part of a chemotaxis signal transduction system that modulates chemotaxis in response to various stimuli. Catalyzes the demethylation of specific methylglutamate residues introduced into the chemoreceptors (methyl-accepting chemotaxis proteins or MCP) by CheR. Also mediates the irreversible deamidation of specific glutamine residues to glutamic acid. This chain is Protein-glutamate methylesterase/protein-glutamine glutaminase, found in Mesorhizobium japonicum (strain LMG 29417 / CECT 9101 / MAFF 303099) (Mesorhizobium loti (strain MAFF 303099)).